A 283-amino-acid chain; its full sequence is MITTQSISDIRKQVTAWRLKGETVAFVPTMGNLHLGHITLVKEAKTRADHVVASIFVNPMQFGQNEDLDAYPRTLADDQAALIEAGAELLFTPTPDIIYPKGMDAQTFVEVPSISDELCGASRPGHFRGVATIVCKLFNIVQPDIAVFGQKDFQQLLVIRTMVEDLSMPIEIVGIETIRETSGLAMSSRNGYLTTEQKDQASQIKRTLNNMALSLKAGLLIKDVVAKAQAELVHVGFRNDYLDVRNANTFAIATAADKDLVILVAAYMGSTRLIDNLVVKLAY.

ATP is bound at residue 30-37 (MGNLHLGH). The active-site Proton donor is His-37. Position 61 (Gln-61) interacts with (R)-pantoate. Gln-61 contacts beta-alanine. 149–152 (GQKD) serves as a coordination point for ATP. Gln-155 is a binding site for (R)-pantoate. ATP-binding positions include Ile-178 and 186-189 (MSSR).

This sequence belongs to the pantothenate synthetase family. As to quaternary structure, homodimer.

It localises to the cytoplasm. It catalyses the reaction (R)-pantoate + beta-alanine + ATP = (R)-pantothenate + AMP + diphosphate + H(+). The protein operates within cofactor biosynthesis; (R)-pantothenate biosynthesis; (R)-pantothenate from (R)-pantoate and beta-alanine: step 1/1. Catalyzes the condensation of pantoate with beta-alanine in an ATP-dependent reaction via a pantoyl-adenylate intermediate. The polypeptide is Pantothenate synthetase (Shewanella pealeana (strain ATCC 700345 / ANG-SQ1)).